Here is a 432-residue protein sequence, read N- to C-terminus: uncharacterized protein (432 aa).

Residues 1 to 18 (MAIGDKRKKNRKNKQNKK) are compositionally biased toward basic residues. Disordered regions lie at residues 1-23 (MAIG…KNDN), 37-56 (NSNS…NGNG), and 122-168 (STNS…GSSL). 3 stretches are compositionally biased toward low complexity: residues 37–53 (NSNS…NNKN), 122–147 (STNS…QQQQ), and 154–168 (ESQS…GSSL). Positions 181–226 (LNDQLKIVQLEQKIVNLEKEIQRMRNEQNQIHKQNLNQYHELLKQI) form a coiled coil. Disordered regions lie at residues 270 to 290 (VQPV…KSNG) and 310 to 432 (SSKF…STLR). Residues 274 to 288 (STPSSSSNSLASKKS) are compositionally biased toward low complexity. Polar residues predominate over residues 311–324 (SKFAQSNSSPSRVN). Positions 352 to 378 (KKSATTTTTSSSSNNATTTTAKGSTST) are enriched in low complexity. The segment covering 383–414 (ITNSNNIKNSVLSPKSITKPNTPSNIIFSPLS) has biased composition (polar residues).

This is an uncharacterized protein from Dictyostelium discoideum (Social amoeba).